The sequence spans 627 residues: uncharacterized protein (627 aa).

A WH1 domain is found at 21-136 (GISASDKILS…NSVCKRQTRS (116 aa)). A disordered region spans residues 310 to 347 (RGSLSTPRIPTHRDSYRSATKPDTVPKQTPPPTHNSYV).

This is an uncharacterized protein from Caenorhabditis elegans.